The primary structure comprises 179 residues: M-phase-specific PLK1-interacting protein (179 aa).

A disordered region spans residues 1–135; that stretch reads MQRQNFRPPT…RVREKRMSNE (135 aa). An Asymmetric dimethylarginine modification is found at Arg37. Phosphoserine occurs at positions 40 and 47. Residue Thr51 is modified to Phosphothreonine. At Arg57 the chain carries Omega-N-methylarginine. Residues Arg59 and Arg68 each carry the asymmetric dimethylarginine modification. The segment covering 60–71 has biased composition (low complexity); the sequence is PYGSSHSPRHGG. Ser72 bears the Phosphoserine mark. Arg77 bears the Asymmetric dimethylarginine mark. The span at 79–109 shows a compositional bias: low complexity; it reads GSPSPGGYPGSYSRSPAGSQQQFGYSPGQQQ. 5 positions are modified to phosphoserine: Ser80, Ser82, Ser93, Ser104, and Ser115. The span at 110–122 shows a compositional bias: polar residues; that stretch reads THPQGSPRTSTPF. At Arg117 the chain carries Omega-N-methylarginine. At Thr120 the chain carries Phosphothreonine. Ser124 and Ser133 each carry phosphoserine.

As to quaternary structure, interacts with PLK1; phosphorylation-dependent. In terms of processing, phosphorylated during mitosis in the cell cycle probably by CDK1. In terms of tissue distribution, expressed at highest levels in liver and kidney; intermediate expression in skeletal muscle, pancreas, heart and placenta; low expression in brain and lung. Expressed in epidermis and hair follicles.

It is found in the nucleus. Its subcellular location is the cytoplasm. The protein resides in the cytoskeleton. It localises to the microtubule organizing center. The protein localises to the centrosome. In terms of biological role, may play a role in maintenance of cell cycle integrity by regulating mitosis or cytokinesis. The chain is M-phase-specific PLK1-interacting protein (MPLKIP) from Homo sapiens (Human).